The sequence spans 428 residues: Adenylosuccinate synthetase (428 aa).

GTP-binding positions include 12–18 (GDEGKGK) and 40–42 (GHT). Catalysis depends on D13, which acts as the Proton acceptor. Mg(2+) contacts are provided by D13 and G40. IMP is bound by residues 13–16 (DEGK), 38–41 (NAGH), T130, R144, Q225, T240, and R304. H41 acts as the Proton donor in catalysis. Position 300-306 (300-306 (ATTGRPR)) interacts with substrate. GTP contacts are provided by residues R306, 332-334 (KLD), and 415-417 (SVG).

Belongs to the adenylosuccinate synthetase family. Homodimer. Mg(2+) is required as a cofactor.

The protein localises to the cytoplasm. The enzyme catalyses IMP + L-aspartate + GTP = N(6)-(1,2-dicarboxyethyl)-AMP + GDP + phosphate + 2 H(+). The protein operates within purine metabolism; AMP biosynthesis via de novo pathway; AMP from IMP: step 1/2. Plays an important role in the de novo pathway of purine nucleotide biosynthesis. Catalyzes the first committed step in the biosynthesis of AMP from IMP. The protein is Adenylosuccinate synthetase of Lawsonia intracellularis (strain PHE/MN1-00).